Consider the following 151-residue polypeptide: UPF0756 membrane protein Hore_21770 (151 aa).

A run of 5 helical transmembrane segments spans residues 7–29 (LLIITILGFLARSRVLVIAGLLL), 49–69 (IEIGLIFLLMAILSSLVLSPV), 84–104 (TVAIIAGVLATKFNGMGLDLL), 110–130 (FILGIIMGSLVGIVFFGGIPV), and 131–151 (GPLMAAGIGAVLFKIIEIIKG).

This sequence belongs to the UPF0756 family.

Its subcellular location is the cell membrane. The polypeptide is UPF0756 membrane protein Hore_21770 (Halothermothrix orenii (strain H 168 / OCM 544 / DSM 9562)).